The following is a 173-amino-acid chain: Large ribosomal subunit protein uL10 (173 aa).

This sequence belongs to the universal ribosomal protein uL10 family. In terms of assembly, part of the ribosomal stalk of the 50S ribosomal subunit. The N-terminus interacts with L11 and the large rRNA to form the base of the stalk. The C-terminus forms an elongated spine to which L12 dimers bind in a sequential fashion forming a multimeric L10(L12)X complex.

Functionally, forms part of the ribosomal stalk, playing a central role in the interaction of the ribosome with GTP-bound translation factors. This chain is Large ribosomal subunit protein uL10, found in Cupriavidus metallidurans (strain ATCC 43123 / DSM 2839 / NBRC 102507 / CH34) (Ralstonia metallidurans).